Consider the following 99-residue polypeptide: Large ribosomal subunit protein bL28 (99 aa).

This sequence belongs to the bacterial ribosomal protein bL28 family.

This Rhizobium etli (strain CIAT 652) protein is Large ribosomal subunit protein bL28.